The following is a 130-amino-acid chain: Small ribosomal subunit protein uS8 (130 aa).

The protein belongs to the universal ribosomal protein uS8 family. Part of the 30S ribosomal subunit. Contacts proteins S5 and S12.

Functionally, one of the primary rRNA binding proteins, it binds directly to 16S rRNA central domain where it helps coordinate assembly of the platform of the 30S subunit. This chain is Small ribosomal subunit protein uS8, found in Pectobacterium carotovorum subsp. carotovorum (strain PC1).